We begin with the raw amino-acid sequence, 456 residues long: UDP-N-acetylmuramate--L-alanine ligase (456 aa).

Residue 117-123 (GTHGKTT) participates in ATP binding.

This sequence belongs to the MurCDEF family.

It is found in the cytoplasm. The enzyme catalyses UDP-N-acetyl-alpha-D-muramate + L-alanine + ATP = UDP-N-acetyl-alpha-D-muramoyl-L-alanine + ADP + phosphate + H(+). Its pathway is cell wall biogenesis; peptidoglycan biosynthesis. Cell wall formation. In Clostridium tetani (strain Massachusetts / E88), this protein is UDP-N-acetylmuramate--L-alanine ligase.